A 268-amino-acid chain; its full sequence is 4-hydroxy-tetrahydrodipicolinate reductase (268 aa).

NAD(+)-binding positions include 10–15 and D36; that span reads GASGRM. R37 provides a ligand contact to NADP(+). Residues 99 to 101 and 123 to 126 each bind NAD(+); these read GTT and SANM. H156 functions as the Proton donor/acceptor in the catalytic mechanism. H157 lines the (S)-2,3,4,5-tetrahydrodipicolinate pocket. The active-site Proton donor is the K160. Residue 166–167 participates in (S)-2,3,4,5-tetrahydrodipicolinate binding; that stretch reads GT.

Belongs to the DapB family.

Its subcellular location is the cytoplasm. It carries out the reaction (S)-2,3,4,5-tetrahydrodipicolinate + NAD(+) + H2O = (2S,4S)-4-hydroxy-2,3,4,5-tetrahydrodipicolinate + NADH + H(+). The enzyme catalyses (S)-2,3,4,5-tetrahydrodipicolinate + NADP(+) + H2O = (2S,4S)-4-hydroxy-2,3,4,5-tetrahydrodipicolinate + NADPH + H(+). Its pathway is amino-acid biosynthesis; L-lysine biosynthesis via DAP pathway; (S)-tetrahydrodipicolinate from L-aspartate: step 4/4. Catalyzes the conversion of 4-hydroxy-tetrahydrodipicolinate (HTPA) to tetrahydrodipicolinate. The protein is 4-hydroxy-tetrahydrodipicolinate reductase of Burkholderia thailandensis (strain ATCC 700388 / DSM 13276 / CCUG 48851 / CIP 106301 / E264).